A 706-amino-acid polypeptide reads, in one-letter code: K(+)-insensitive pyrophosphate-energized proton pump (706 aa).

5 consecutive transmembrane segments (helical) span residues 1-21 (MTALWVIVLCGALSIVYAIWA), 62-82 (VVIFALLAYFLGILVAIGFAI), 83-103 (GAILSGAAGFIGMNVSVRANV), 129-149 (LLVAGLALLGVTLYFIYLIHF), and 164-184 (VALGFGASLISIFARLGGGIF). Substrate is bound at residue lysine 186. Mg(2+)-binding residues include aspartate 189, aspartate 193, asparagine 216, and aspartate 219. 6 helical membrane passes run 231 to 251 (LFETYAVTAVATMVLAAIFFG), 263 to 283 (TLPLAIGGICILTSIAGTFFV), 300 to 320 (IATGVLSLVGVGVVIHQLIGF), 330 to 350 (GLALFECGIVGLAVTGLIIWI), 393 to 413 (IVIIAGILITYSLAGLFGIAI), and 414 to 434 (ATTTMLALAGMIVALDAFGPV). Residue aspartate 436 participates in Mg(2+) binding. The next 4 helical transmembrane spans lie at 467–487 (AVTKGYAIGSAGLGALVLFAA), 516–536 (YVVVGLLFGGLLPYLFGAMGM), 585–605 (IIPSLLPVLSPIFVYFAIYAI), and 616–636 (AFSAVGAMLLGVIVTGLFVAI). 3 residues coordinate Ca(2+): aspartate 646, aspartate 672, and aspartate 676. Lysine 679 is a binding site for substrate. The helical transmembrane segment at 685–705 (AVNPMIKITNIVALLLLAILA) threads the bilayer.

Belongs to the H(+)-translocating pyrophosphatase (TC 3.A.10) family. K(+)-insensitive subfamily. Homodimer. It depends on Mg(2+) as a cofactor.

The protein resides in the cell inner membrane. It catalyses the reaction diphosphate + H2O + H(+)(in) = 2 phosphate + 2 H(+)(out). In terms of biological role, proton pump that utilizes the energy of pyrophosphate hydrolysis as the driving force for proton movement across the membrane. Generates a proton motive force. The polypeptide is K(+)-insensitive pyrophosphate-energized proton pump (Rhodopseudomonas palustris (strain ATCC BAA-98 / CGA009)).